The primary structure comprises 185 residues: Der GTPase-activating protein YihI (185 aa).

2 disordered regions span residues 1 to 74 (MGRS…KKKI) and 145 to 169 (EPED…SSDE). A compositionally biased stretch (basic and acidic residues) spans 23 to 33 (NRSESDVEGRE). The segment covering 34–47 (RKRVKKRKGLKSGS) has biased composition (basic residues). The span at 48–68 (RHSDGSEAKQRKAALARDPRL) shows a compositional bias: basic and acidic residues. Residues 145 to 155 (EPEDDEEEIFE) are compositionally biased toward acidic residues.

Belongs to the YihI family. In terms of assembly, interacts with Der.

A GTPase-activating protein (GAP) that modifies Der/EngA GTPase function. May play a role in ribosome biogenesis. The polypeptide is Der GTPase-activating protein YihI (Vibrio atlanticus (strain LGP32) (Vibrio splendidus (strain Mel32))).